The primary structure comprises 308 residues: NADH-cytochrome b5 reductase 1 (308 aa).

The chain crosses the membrane as a helical span at residues isoleucine 10–isoleucine 27. Residues threonine 59 to threonine 164 enclose the FAD-binding FR-type domain. FAD contacts are provided by residues threonine 144–glycine 159 and histidine 170–leucine 207.

This sequence belongs to the flavoprotein pyridine nucleotide cytochrome reductase family. As to quaternary structure, monomer. Component of the 2-(3-amino-3-carboxypropyl)histidine synthase complex composed of DPH1, DPH2, DPH3 and a NADH-dependent reductase, predominantly CBR1. FAD is required as a cofactor.

It localises to the mitochondrion outer membrane. It catalyses the reaction 2 Fe(III)-[cytochrome b5] + NADH = 2 Fe(II)-[cytochrome b5] + NAD(+) + H(+). The enzyme catalyses 2 Fe(3+)-[Dph3] + NADH = 2 Fe(2+)-[Dph3] + NAD(+) + H(+). It participates in protein modification; peptidyl-diphthamide biosynthesis. NADH-dependent reductase for DPH3 and cytochrome b5. Required for the first step of diphthamide biosynthesis, a post-translational modification of histidine which occurs in elongation factor 2. DPH1 and DPH2 transfer a 3-amino-3-carboxypropyl (ACP) group from S-adenosyl-L-methionine (SAM) to a histidine residue, the reaction is assisted by a reduction system comprising DPH3 and a NADH-dependent reductase, predominantly CBR1. By reducing DPH3, also involved in the formation of the tRNA wobble base modification mcm5s 2U (5-methoxycarbonylmethyl-2-thiouridine), mediated by the elongator complex. The cytochrome b5/NADH cytochrome b5 reductase electron transfer system supports the catalytic activity of several sterol biosynthetic enzymes. This Coccidioides immitis (strain RS) (Valley fever fungus) protein is NADH-cytochrome b5 reductase 1 (CBR1).